Here is a 251-residue protein sequence, read N- to C-terminus: Hydroxyacylglutathione hydrolase (251 aa).

The Zn(2+) site is built by histidine 53, histidine 55, aspartate 57, histidine 58, histidine 110, aspartate 127, and histidine 165.

This sequence belongs to the metallo-beta-lactamase superfamily. Glyoxalase II family. As to quaternary structure, monomer. Zn(2+) serves as cofactor.

It carries out the reaction an S-(2-hydroxyacyl)glutathione + H2O = a 2-hydroxy carboxylate + glutathione + H(+). It participates in secondary metabolite metabolism; methylglyoxal degradation; (R)-lactate from methylglyoxal: step 2/2. Functionally, thiolesterase that catalyzes the hydrolysis of S-D-lactoyl-glutathione to form glutathione and D-lactic acid. The chain is Hydroxyacylglutathione hydrolase from Yersinia pestis (strain Pestoides F).